Consider the following 341-residue polypeptide: Geranylgeranyl pyrophosphate synthase penG (341 aa).

Positions 68, 71, and 100 each coordinate isopentenyl diphosphate. Residues D107 and D111 each contribute to the Mg(2+) site. R116 serves as a coordination point for dimethylallyl diphosphate. An isopentenyl diphosphate-binding site is contributed by R117. K194, T195, and Q228 together coordinate dimethylallyl diphosphate. D231 provides a ligand contact to Mg(2+). Dimethylallyl diphosphate-binding residues include N235, K245, and K255.

The protein belongs to the FPP/GGPP synthase family. Mg(2+) serves as cofactor.

It catalyses the reaction isopentenyl diphosphate + dimethylallyl diphosphate = (2E)-geranyl diphosphate + diphosphate. It carries out the reaction isopentenyl diphosphate + (2E)-geranyl diphosphate = (2E,6E)-farnesyl diphosphate + diphosphate. The enzyme catalyses isopentenyl diphosphate + (2E,6E)-farnesyl diphosphate = (2E,6E,10E)-geranylgeranyl diphosphate + diphosphate. Its pathway is secondary metabolite biosynthesis. In terms of biological role, geranylgeranyl pyrophosphate synthase; part of the gene cluster that mediates the biosynthesis of the indole diterpenes penitrems. The geranylgeranyl diphosphate (GGPP) synthase penG catalyzes the first step in penitrem biosynthesis via conversion of farnesyl pyrophosphate and isopentyl pyrophosphate into geranylgeranyl pyrophosphate (GGPP). Condensation of indole-3-glycerol phosphate with GGPP by the prenyl transferase penC then forms 3-geranylgeranylindole (3-GGI). Epoxidation by the FAD-dependent monooxygenase penM leads to a epoxidized-GGI that is substrate of the terpene cyclase penB for cyclization to yield paspaline. Paspaline is subsequently converted to 13-desoxypaxilline by the cytochrome P450 monooxygenase penP, the latter being then converted to paxilline by the cytochrome P450 monooxygenase penQ. Paxilline is converted to beta-paxitriol via C-10 ketoreduction by the short-chain dehydrogenase PC-15 which can be monoprenylated at the C-20 by the indole diterpene prenyltransferase penD. A two-step elimination (acetylation and elimination) process performed by the O-acetyltransferase PC-16 and the P.simplicissimum ptmI-ortholog not yet identified in P.crustosum, leads to the production of the prenylated form of penijanthine. The FAD-linked oxidoreductase ptmO then converts the prenylated form of penijanthine into PC-M5 which is in turn transformed into PC-M4 by the aromatic dimethylallyltransferase PC-22. A series of oxidation steps involving 4 cytochrome P450 monooxygenases (PC-21, PC-05, PC-23, PC-20) and a FAD-dependent monooxygenase (PC-14) are required for the transformation of PC-M4 to penitrems A and E. Synthesis of these final products is proposed to proceed via penitrems D and C (PC-21, PC-05, PC-14) and penitrems B and F (PC-21, PC-05, PC-14, PC-23). The chain is Geranylgeranyl pyrophosphate synthase penG from Penicillium crustosum (Blue mold fungus).